A 193-amino-acid polypeptide reads, in one-letter code: Xanthine phosphoribosyltransferase (193 aa).

The xanthine site is built by leucine 20 and threonine 27. 128-132 (ANGQA) is a binding site for 5-phospho-alpha-D-ribose 1-diphosphate. Lysine 156 lines the xanthine pocket.

The protein belongs to the purine/pyrimidine phosphoribosyltransferase family. Xpt subfamily. Homodimer.

It localises to the cytoplasm. It catalyses the reaction XMP + diphosphate = xanthine + 5-phospho-alpha-D-ribose 1-diphosphate. It functions in the pathway purine metabolism; XMP biosynthesis via salvage pathway; XMP from xanthine: step 1/1. In terms of biological role, converts the preformed base xanthine, a product of nucleic acid breakdown, to xanthosine 5'-monophosphate (XMP), so it can be reused for RNA or DNA synthesis. This is Xanthine phosphoribosyltransferase from Streptococcus agalactiae serotype Ia (strain ATCC 27591 / A909 / CDC SS700).